The sequence spans 367 residues: Histidinol-phosphate aminotransferase (367 aa).

K227 carries the post-translational modification N6-(pyridoxal phosphate)lysine.

The protein belongs to the class-II pyridoxal-phosphate-dependent aminotransferase family. Histidinol-phosphate aminotransferase subfamily. As to quaternary structure, homodimer. It depends on pyridoxal 5'-phosphate as a cofactor.

The catalysed reaction is L-histidinol phosphate + 2-oxoglutarate = 3-(imidazol-4-yl)-2-oxopropyl phosphate + L-glutamate. Its pathway is amino-acid biosynthesis; L-histidine biosynthesis; L-histidine from 5-phospho-alpha-D-ribose 1-diphosphate: step 7/9. The protein is Histidinol-phosphate aminotransferase of Leptospira borgpetersenii serovar Hardjo-bovis (strain JB197).